The chain runs to 345 residues: Metal-dependent phosphohydrolase cns2 (345 aa).

Positions 70-171 (RLEHSVGAFI…QLCADRLDYA (102 aa)) constitute an HD domain.

Interacts with cns1.

The protein resides in the lipid droplet. Its pathway is secondary metabolite biosynthesis. Metal-dependent phosphohydrolase; part of the gene cluster that mediates the biosynthesis of cordycepin (COR) and pentostatin (PTN), two adenosine analogs with related bioactivity profiles as both mimic adenosine and can inhibit some of the processes that are adenosine dependent. Within the pathway, cns2 catalyzes dephosphorylation of 3'-AMP to produce 2'-carbonyl-3'-deoxyadenosine (2'-C-3'-dA). The first step of cordycepin biosynthesis involves hydroxyl phosphorylation of the 3'-OH position on adenosine to produce adenosine-3'-monophosphate (3'-AMP), catalyzed by kinase activity of cns3. Next, 3'-AMP is dephosphorylated to 2'-carbonyl-3'-deoxyadenosine by cns2, which is finally converted to cordycepin (3'-deoxyadenosine) by the oxidoreductase cns1. The chain is Metal-dependent phosphohydrolase cns2 from Cordyceps militaris (strain CM01) (Caterpillar fungus).